A 205-amino-acid chain; its full sequence is Mitotic spindle assembly checkpoint protein MAD2A (205 aa).

An N-acetylalanine modification is found at A2. One can recognise an HORMA domain in the interval 14 to 197 (RGSAEIVAEF…TTIHKVNSMV (184 aa)). A phosphoserine mark is found at S130, S170, S185, and S195. A required for assuming the closed conformation and for interaction with CDC20 region spans residues 195–205 (SMVAYKTPVND).

Belongs to the MAD2 family. As to quaternary structure, monomer and homodimer. Heterodimerizes with MAD2L1 in order to form a tetrameric MAD1L1-MAD2L1 core complex. In the closed and open conformation, interacts with MAD1L1. Formation of a heterotetrameric core complex containing two molecules each of MAD1L1 and of MAD2L1 promotes binding of another molecule of MAD2L1 to each MAD2L1, resulting in a heterohexamer. Interacts with MAD2L1BP. Interacts with ADAM17/TACE. Interacts with CDC20. Dimeric MAD2L1 in the closed conformation interacts with CDC20. Monomeric MAD2L1 in the open conformation does not interact with CDC20. CDC20 competes with MAD1L1 for MAD2L1 binding. In the closed conformation, interacts with BUB1B. Interacts with TTK. Interacts with TPR. Binds to UBD (via ubiquitin-like 1 domain) during mitosis. Interacts with isoform 1 and isoform 2 of NEK2. Interacts with HSF1; this interaction occurs in mitosis. Post-translationally, phosphorylated on multiple serine residues. The level of phosphorylation varies during the cell cycle and is highest during mitosis. Phosphorylation abolishes interaction with MAD1L1 and reduces interaction with CDC20. Phosphorylated by NEK2.

It is found in the nucleus. The protein resides in the chromosome. Its subcellular location is the centromere. The protein localises to the kinetochore. It localises to the cytoplasm. It is found in the cytoskeleton. The protein resides in the spindle pole. In terms of biological role, component of the spindle-assembly checkpoint that prevents the onset of anaphase until all chromosomes are properly aligned at the metaphase plate. In the closed conformation (C-MAD2) forms a heterotetrameric complex with MAD1L1 at unattached kinetochores during prometaphase, and recruits an open conformation of MAD2L1 (O-MAD2) which then promotes the conversion of O-MAD2 to C-MAD2. Required for the execution of the mitotic checkpoint which monitors the process of kinetochore-spindle attachment and inhibits the activity of the anaphase promoting complex by sequestering CDC20 until all chromosomes are aligned at the metaphase plate. This Mus musculus (Mouse) protein is Mitotic spindle assembly checkpoint protein MAD2A (Mad2l1).